Reading from the N-terminus, the 375-residue chain is Succinyl-diaminopimelate desuccinylase (375 aa).

H66 lines the Zn(2+) pocket. The active site involves D68. Residue D99 coordinates Zn(2+). E133 (proton acceptor) is an active-site residue. The Zn(2+) site is built by E134, E162, and H348.

It belongs to the peptidase M20A family. DapE subfamily. Homodimer. Zn(2+) serves as cofactor. The cofactor is Co(2+).

The catalysed reaction is N-succinyl-(2S,6S)-2,6-diaminopimelate + H2O = (2S,6S)-2,6-diaminopimelate + succinate. It functions in the pathway amino-acid biosynthesis; L-lysine biosynthesis via DAP pathway; LL-2,6-diaminopimelate from (S)-tetrahydrodipicolinate (succinylase route): step 3/3. In terms of biological role, catalyzes the hydrolysis of N-succinyl-L,L-diaminopimelic acid (SDAP), forming succinate and LL-2,6-diaminopimelate (DAP), an intermediate involved in the bacterial biosynthesis of lysine and meso-diaminopimelic acid, an essential component of bacterial cell walls. This is Succinyl-diaminopimelate desuccinylase from Herminiimonas arsenicoxydans.